The sequence spans 115 residues: ESX-1 secretion-associated protein EspL (115 aa).

This chain is ESX-1 secretion-associated protein EspL, found in Mycobacterium tuberculosis (strain CDC 1551 / Oshkosh).